The primary structure comprises 438 residues: Thymidine phosphorylase (438 aa).

The protein belongs to the thymidine/pyrimidine-nucleoside phosphorylase family. In terms of assembly, homodimer.

The catalysed reaction is thymidine + phosphate = 2-deoxy-alpha-D-ribose 1-phosphate + thymine. It participates in pyrimidine metabolism; dTMP biosynthesis via salvage pathway; dTMP from thymine: step 1/2. The enzymes which catalyze the reversible phosphorolysis of pyrimidine nucleosides are involved in the degradation of these compounds and in their utilization as carbon and energy sources, or in the rescue of pyrimidine bases for nucleotide synthesis. The chain is Thymidine phosphorylase from Agrobacterium fabrum (strain C58 / ATCC 33970) (Agrobacterium tumefaciens (strain C58)).